The sequence spans 232 residues: uncharacterized protein (232 aa).

The protein resides in the cytoplasm. It is found in the nucleus. This is an uncharacterized protein from Saccharomyces cerevisiae (strain ATCC 204508 / S288c) (Baker's yeast).